The following is a 338-amino-acid chain: D-erythrose-4-phosphate dehydrogenase (338 aa).

NAD(+) is bound at residue 11–12; the sequence is RI. Substrate contacts are provided by residues 153–155, Arg199, 212–213, and Arg235; these read SCT and TK. The active-site Nucleophile is the Cys154. Asn317 provides a ligand contact to NAD(+).

It belongs to the glyceraldehyde-3-phosphate dehydrogenase family. Epd subfamily. As to quaternary structure, homotetramer.

It is found in the cytoplasm. The enzyme catalyses D-erythrose 4-phosphate + NAD(+) + H2O = 4-phospho-D-erythronate + NADH + 2 H(+). It functions in the pathway cofactor biosynthesis; pyridoxine 5'-phosphate biosynthesis; pyridoxine 5'-phosphate from D-erythrose 4-phosphate: step 1/5. Its function is as follows. Catalyzes the NAD-dependent conversion of D-erythrose 4-phosphate to 4-phosphoerythronate. In Shewanella sp. (strain MR-4), this protein is D-erythrose-4-phosphate dehydrogenase.